The primary structure comprises 167 residues: Phosphopantetheine adenylyltransferase (167 aa).

A substrate-binding site is contributed by serine 10. Residues 10 to 11 and histidine 18 each bind ATP; that span reads SF. Lysine 42, alanine 79, and arginine 93 together coordinate substrate. Residues 94–96, glutamate 104, and 129–135 each bind ATP; these read GLR and VRHITAT.

It belongs to the bacterial CoaD family. In terms of assembly, homohexamer. The cofactor is Mg(2+).

It localises to the cytoplasm. It carries out the reaction (R)-4'-phosphopantetheine + ATP + H(+) = 3'-dephospho-CoA + diphosphate. It participates in cofactor biosynthesis; coenzyme A biosynthesis; CoA from (R)-pantothenate: step 4/5. Functionally, reversibly transfers an adenylyl group from ATP to 4'-phosphopantetheine, yielding dephospho-CoA (dPCoA) and pyrophosphate. The protein is Phosphopantetheine adenylyltransferase of Beijerinckia indica subsp. indica (strain ATCC 9039 / DSM 1715 / NCIMB 8712).